The sequence spans 498 residues: Zinc finger protein 395 (498 aa).

A disordered region spans residues 129–165; the sequence is QKPLSSPIEQSLPTSPGATSTSAQRSVSRSIDVPKRR. The segment covering 130–157 has biased composition (polar residues); the sequence is KPLSSPIEQSLPTSPGATSTSAQRSVSR. Residues 171–180 carry the Nuclear export signal motif; it reads MDEMMAAMVL. Residues 209–245 are disordered; sequence KEGGDVSDSGSSTTSGHWSASSGVSTPSPPHTDASPK. The span at 214-231 shows a compositional bias: low complexity; that stretch reads VSDSGSSTTSGHWSASSG. The segment at 285-310 adopts a C2H2-type zinc-finger fold; sequence YKCLWPNCGKLLRSIVGIKRHVKTQH.

It is found in the cytoplasm. Its subcellular location is the nucleus. The sequence is that of Zinc finger protein 395 (znf395) from Xenopus laevis (African clawed frog).